Here is a 211-residue protein sequence, read N- to C-terminus: ATP phosphoribosyltransferase (211 aa).

The protein belongs to the ATP phosphoribosyltransferase family. Short subfamily. In terms of assembly, heteromultimer composed of HisG and HisZ subunits.

Its subcellular location is the cytoplasm. It catalyses the reaction 1-(5-phospho-beta-D-ribosyl)-ATP + diphosphate = 5-phospho-alpha-D-ribose 1-diphosphate + ATP. The protein operates within amino-acid biosynthesis; L-histidine biosynthesis; L-histidine from 5-phospho-alpha-D-ribose 1-diphosphate: step 1/9. Catalyzes the condensation of ATP and 5-phosphoribose 1-diphosphate to form N'-(5'-phosphoribosyl)-ATP (PR-ATP). Has a crucial role in the pathway because the rate of histidine biosynthesis seems to be controlled primarily by regulation of HisG enzymatic activity. The protein is ATP phosphoribosyltransferase of Bacillus cereus (strain B4264).